Consider the following 705-residue polypeptide: 3-hydroxypropionate--CoA ligase [ADP-forming] (705 aa).

Positions lysine 25 to lysine 61 constitute an ATP-grasp domain. Alanine 51–lysine 61 serves as a coordination point for ATP.

The protein in the N-terminal section; belongs to the acetate CoA ligase beta subunit family. This sequence in the C-terminal section; belongs to the acetate CoA ligase alpha subunit family. It depends on Mg(2+) as a cofactor. The cofactor is Mn(2+).

It catalyses the reaction 3-hydroxypropanoate + ATP + CoA = 3-hydroxypropanoyl-CoA + ADP + phosphate. Its function is as follows. Involved in thaumarchaeal hydroxypropionate/hydroxybutyrate (HP/HB) cycle, a modified version of the autotrophic HP/HB cycle of Crenarchaeota. Catalyzes the formation of 3-hydroxypropionyl-CoA, ADP and phosphate from 3-hydroxypropionate, coenzyme A (CoA) and ATP. Can also use 4-hydroxybutyrate, propionate and butyrate, with poor catalytic efficiency. The chain is 3-hydroxypropionate--CoA ligase [ADP-forming] from Nitrosopumilus maritimus (strain SCM1).